Consider the following 430-residue polypeptide: Adenylosuccinate synthetase (430 aa).

GTP is bound by residues 12–18 (GDEGKGK) and 40–42 (GHT). The Proton acceptor role is filled by aspartate 13. Residues aspartate 13 and glycine 40 each coordinate Mg(2+). IMP is bound by residues 13–16 (DEGK), 38–41 (NAGH), threonine 128, arginine 142, glutamine 223, threonine 238, and arginine 302. Residue histidine 41 is the Proton donor of the active site. 298–304 (TTTGRPR) lines the substrate pocket. GTP contacts are provided by residues arginine 304, 330–332 (LLD), and 412–414 (SVG).

Belongs to the adenylosuccinate synthetase family. In terms of assembly, homodimer. Mg(2+) is required as a cofactor.

Its subcellular location is the cytoplasm. It carries out the reaction IMP + L-aspartate + GTP = N(6)-(1,2-dicarboxyethyl)-AMP + GDP + phosphate + 2 H(+). It functions in the pathway purine metabolism; AMP biosynthesis via de novo pathway; AMP from IMP: step 1/2. Plays an important role in the de novo pathway of purine nucleotide biosynthesis. Catalyzes the first committed step in the biosynthesis of AMP from IMP. This is Adenylosuccinate synthetase from Listeria monocytogenes serotype 4b (strain CLIP80459).